A 231-amino-acid chain; its full sequence is Orotidine 5'-phosphate decarboxylase (231 aa).

Substrate-binding positions include D11, K33, 60 to 69 (DLKLHDIPNT), T117, R179, Q187, G207, and R208. Catalysis depends on K62, which acts as the Proton donor.

This sequence belongs to the OMP decarboxylase family. Type 1 subfamily. Homodimer.

The enzyme catalyses orotidine 5'-phosphate + H(+) = UMP + CO2. It participates in pyrimidine metabolism; UMP biosynthesis via de novo pathway; UMP from orotate: step 2/2. In terms of biological role, catalyzes the decarboxylation of orotidine 5'-monophosphate (OMP) to uridine 5'-monophosphate (UMP). This Ehrlichia chaffeensis (strain ATCC CRL-10679 / Arkansas) protein is Orotidine 5'-phosphate decarboxylase.